Here is a 476-residue protein sequence, read N- to C-terminus: Cytochrome c oxidase subunit 1 (476 aa).

Residues 19-39 (LYYLWFSFLFGTYGFLLSVIL) form a helical membrane-spanning segment. Position 42 (Glu-42) interacts with Ca(2+). 8 helical membrane-spanning segments follow: residues 61–81 (MIFT…GLFG), 105–125 (ISLL…AAEF), 144–164 (LSPV…IASI), 194–214 (IIIT…GVLM), 240–260 (LFWF…FGVI), 278–298 (MILA…HHMY), 309–329 (FFTS…FNWL), and 345–365 (LLCL…VILG). Residue His-66 participates in Fe(II)-heme a binding. Residue His-246 coordinates Cu cation. The segment at residues 246-250 (HPEVY) is a cross-link (1'-histidyl-3'-tyrosine (His-Tyr)). Residue Tyr-250 coordinates O2. Positions 295 and 296 each coordinate Cu cation. Residues His-374 and Asp-375 each coordinate Mg(2+). 2 helical membrane passes run 379–399 (VIAH…FTCV) and 415–435 (TLIV…FLPM). Position 382 (His-382) interacts with heme a3. His-384 provides a ligand contact to Fe(II)-heme a. Position 448 (Pro-448) interacts with Ca(2+). Residues 455–475 (NGWNMICSIGSTMTLFGLLIF) traverse the membrane as a helical segment.

This sequence belongs to the heme-copper respiratory oxidase family. As to quaternary structure, component of the cytochrome c oxidase (complex IV, CIV), a multisubunit enzyme composed of a catalytic core of 3 subunits and several supernumerary subunits. The complex exists as a monomer or a dimer and forms supercomplexes (SCs) in the inner mitochondrial membrane with ubiquinol-cytochrome c oxidoreductase (cytochrome b-c1 complex, complex III, CIII). It depends on heme as a cofactor. The cofactor is Cu cation.

It is found in the mitochondrion inner membrane. The catalysed reaction is 4 Fe(II)-[cytochrome c] + O2 + 8 H(+)(in) = 4 Fe(III)-[cytochrome c] + 2 H2O + 4 H(+)(out). Its pathway is energy metabolism; oxidative phosphorylation. Component of the cytochrome c oxidase, the last enzyme in the mitochondrial electron transport chain which drives oxidative phosphorylation. The respiratory chain contains 3 multisubunit complexes succinate dehydrogenase (complex II, CII), ubiquinol-cytochrome c oxidoreductase (cytochrome b-c1 complex, complex III, CIII) and cytochrome c oxidase (complex IV, CIV), that cooperate to transfer electrons derived from NADH and succinate to molecular oxygen, creating an electrochemical gradient over the inner membrane that drives transmembrane transport and the ATP synthase. Cytochrome c oxidase is the component of the respiratory chain that catalyzes the reduction of oxygen to water. Electrons originating from reduced cytochrome c in the intermembrane space (IMS) are transferred via the dinuclear copper A center (CU(A)) of subunit 2 and heme A of subunit 1 to the active site in subunit 1, a binuclear center (BNC) formed by heme A3 and copper B (CU(B)). The BNC reduces molecular oxygen to 2 water molecules using 4 electrons from cytochrome c in the IMS and 4 protons from the mitochondrial matrix. This Plasmodium berghei protein is Cytochrome c oxidase subunit 1 (COI).